The primary structure comprises 87 residues: Small ribosomal subunit protein bS18 (87 aa).

The segment covering M1–R10 has biased composition (basic and acidic residues). Positions M1–A23 are disordered.

This sequence belongs to the bacterial ribosomal protein bS18 family. Part of the 30S ribosomal subunit. Forms a tight heterodimer with protein bS6.

Binds as a heterodimer with protein bS6 to the central domain of the 16S rRNA, where it helps stabilize the platform of the 30S subunit. The chain is Small ribosomal subunit protein bS18 from Clavibacter sepedonicus (Clavibacter michiganensis subsp. sepedonicus).